The sequence spans 117 residues: NADH-ubiquinone oxidoreductase chain 3 (117 aa).

The next 3 membrane-spanning stretches (helical) occupy residues 4–24 (IIFI…LASI), 60–80 (ITII…MIII), and 86–106 (IMIW…GLYH).

Belongs to the complex I subunit 3 family.

It localises to the mitochondrion membrane. It carries out the reaction a ubiquinone + NADH + 5 H(+)(in) = a ubiquinol + NAD(+) + 4 H(+)(out). In terms of biological role, core subunit of the mitochondrial membrane respiratory chain NADH dehydrogenase (Complex I) that is believed to belong to the minimal assembly required for catalysis. Complex I functions in the transfer of electrons from NADH to the respiratory chain. The immediate electron acceptor for the enzyme is believed to be ubiquinone. This Drosophila melanogaster (Fruit fly) protein is NADH-ubiquinone oxidoreductase chain 3 (mt:ND3).